A 236-amino-acid polypeptide reads, in one-letter code: ATP phosphoribosyltransferase (236 aa).

This sequence belongs to the ATP phosphoribosyltransferase family. Short subfamily. As to quaternary structure, heteromultimer composed of HisG and HisZ subunits.

Its subcellular location is the cytoplasm. It carries out the reaction 1-(5-phospho-beta-D-ribosyl)-ATP + diphosphate = 5-phospho-alpha-D-ribose 1-diphosphate + ATP. It functions in the pathway amino-acid biosynthesis; L-histidine biosynthesis; L-histidine from 5-phospho-alpha-D-ribose 1-diphosphate: step 1/9. Its function is as follows. Catalyzes the condensation of ATP and 5-phosphoribose 1-diphosphate to form N'-(5'-phosphoribosyl)-ATP (PR-ATP). Has a crucial role in the pathway because the rate of histidine biosynthesis seems to be controlled primarily by regulation of HisG enzymatic activity. This is ATP phosphoribosyltransferase (hisG) from Cereibacter sphaeroides (strain ATCC 17023 / DSM 158 / JCM 6121 / CCUG 31486 / LMG 2827 / NBRC 12203 / NCIMB 8253 / ATH 2.4.1.) (Rhodobacter sphaeroides).